Here is a 235-residue protein sequence, read N- to C-terminus: Eukaryotic translation initiation factor 4E-1 (235 aa).

Residues 1 to 52 form a disordered region; the sequence is MVVEDSMKATSAEDLSNSIANQNPRGRGGDEDEELEEGEIVGDDDLDSSNLS. Residues 13 to 24 are compositionally biased toward polar residues; the sequence is EDLSNSIANQNP. Positions 30 to 47 are enriched in acidic residues; that stretch reads DEDEELEEGEIVGDDDLD. EIF4G-binding stretches follow at residues 60-63 and 70-106; these read HPLE and FDNP…NNIH. MRNA is bound by residues 78-83, K110, and 128-129; these read KQATWG and WE. A disulfide bridge connects residues C133 and C171. Residues 154–163 form an EIF4G-binding region; it reads YTLLAMIGEQ. MRNA is bound by residues 178-183 and 223-227; these read RSGQDK and KKFDR.

Belongs to the eukaryotic initiation factor 4E family. EIF4F is a multi-subunit complex, the composition of which varies with external and internal environmental conditions. It is composed of at least EIF4A, EIF4E and EIF4G. EIF4E is also known to interact with other partners. Interacts directly with eIF4G. In higher plants two isoforms of EIF4F have been identified, named isoform EIF4F and isoform EIF(iso)4F. Isoform EIF4F has subunits p220 and p26, whereas isoform EIF(iso)4F has subunits p82 and p28. As to quaternary structure, (Microbial infection) Interacts with potyvirus viral genome-linked protein (VPg); this interaction is possible in susceptible hosts but impaired in resistant plants. According to the redox status, the Cys-133-Cys-171 disulfide bridge may have a role in regulating protein function by affecting its ability to bind capped mRNA.

The protein resides in the nucleus. Its subcellular location is the cytoplasm. In terms of biological role, component of the protein complex eIF4F, which is involved in the recognition of the mRNA cap, ATP-dependent unwinding of 5'-terminal secondary structure and recruitment of mRNA to the ribosome. Recognizes and binds the 7-methylguanosine-containing mRNA cap during an early step in the initiation of protein synthesis and facilitates ribosome binding by inducing the unwinding of the mRNAs secondary structures. Key component of recessive resistance to potyviruses and Tombusviridae genus Carmovirus such as melon necrotic spot virus (MNSV). (Microbial infection) Susceptibility host factor required for viral infection by recruiting viral RNAs, including uncapped and non-polyadenylated RNA, to the host ribosomal complex via an interaction with viral genome-linked protein (VPg). The polypeptide is Eukaryotic translation initiation factor 4E-1 (Cucumis melo (Muskmelon)).